The following is a 63-amino-acid chain: Defensin-like protein 278 (63 aa).

Residues 1–15 (MSLVYMYMYIGVVMS) form the signal peptide. 3 disulfides stabilise this stretch: Cys-31–Cys-48, Cys-37–Cys-53, and Cys-41–Cys-55.

It belongs to the DEFL family.

The protein resides in the secreted. This is Defensin-like protein 278 from Arabidopsis thaliana (Mouse-ear cress).